The following is a 293-amino-acid chain: MTDSTRSLRNCLAPAKLNLFLHITGRRPNGYHDLQSVFQLLNWGDTLHFTLRDDGRVARVTDVPGVPEESDLVVRAANLLKAHTGTAHGVDVEIDKILPMGAGLGGGSSDAATTLLALNRLWQLDLPRAELQSLAVKLGADVPFFIFGKNAFAEGIGEELAEVELPTRWFLVVTPRVHVPTAEIFSDELLTRDTKPVTIADFLAQQTSDAEWPDSFGRNDMQEVVTRKYAEVAQVVKWLYDVTPARMTGSGASVFAAFHSKHEAEAAKAKLPASWNGAVAESLNEHPLFAFAS.

The active site involves K16. ATP is bound at residue 99-109; that stretch reads PMGAGLGGGSS. D141 is an active-site residue.

This sequence belongs to the GHMP kinase family. IspE subfamily.

The catalysed reaction is 4-CDP-2-C-methyl-D-erythritol + ATP = 4-CDP-2-C-methyl-D-erythritol 2-phosphate + ADP + H(+). It participates in isoprenoid biosynthesis; isopentenyl diphosphate biosynthesis via DXP pathway; isopentenyl diphosphate from 1-deoxy-D-xylulose 5-phosphate: step 3/6. Catalyzes the phosphorylation of the position 2 hydroxy group of 4-diphosphocytidyl-2C-methyl-D-erythritol. The sequence is that of 4-diphosphocytidyl-2-C-methyl-D-erythritol kinase from Burkholderia orbicola (strain MC0-3).